A 218-amino-acid polypeptide reads, in one-letter code: Protein N-lysine methyltransferase METTL21A (218 aa).

S-adenosyl-L-methionine is bound by residues Trp-47, 73 to 75 (GAG), Asp-94, Trp-125, and Ala-143.

The protein belongs to the methyltransferase superfamily. METTL21 family. Interacts with heat shock 70 family members; at least some of these proteins are methylation substrates.

It is found in the cytoplasm. The catalysed reaction is L-lysyl-[protein] + 3 S-adenosyl-L-methionine = N(6),N(6),N(6)-trimethyl-L-lysyl-[protein] + 3 S-adenosyl-L-homocysteine + 3 H(+). Protein-lysine methyltransferase that selectively trimethylates residues in heat shock protein 70 (HSP70) family members. Contributes to the in vivo trimethylation of Lys residues in HSPA1 and HSPA8. In vitro methylates 'Lys-561' in HSPA1, 'Lys-564' in HSPA2, 'Lys-585' in HSPA5, 'Lys-563' in HSPA6 and 'Lys-561' in HSPA8. This chain is Protein N-lysine methyltransferase METTL21A (METTL21A), found in Bos taurus (Bovine).